Reading from the N-terminus, the 68-residue chain is uncharacterized protein (68 aa).

This is an uncharacterized protein from Saccharomyces cerevisiae (strain ATCC 204508 / S288c) (Baker's yeast).